Reading from the N-terminus, the 245-residue chain is 1-(5-phosphoribosyl)-5-[(5-phosphoribosylamino)methylideneamino] imidazole-4-carboxamide isomerase (245 aa).

Catalysis depends on Asp8, which acts as the Proton acceptor. The active-site Proton donor is Asp130.

It belongs to the HisA/HisF family.

Its subcellular location is the cytoplasm. The enzyme catalyses 1-(5-phospho-beta-D-ribosyl)-5-[(5-phospho-beta-D-ribosylamino)methylideneamino]imidazole-4-carboxamide = 5-[(5-phospho-1-deoxy-D-ribulos-1-ylimino)methylamino]-1-(5-phospho-beta-D-ribosyl)imidazole-4-carboxamide. Its pathway is amino-acid biosynthesis; L-histidine biosynthesis; L-histidine from 5-phospho-alpha-D-ribose 1-diphosphate: step 4/9. In Pseudomonas putida (strain ATCC 700007 / DSM 6899 / JCM 31910 / BCRC 17059 / LMG 24140 / F1), this protein is 1-(5-phosphoribosyl)-5-[(5-phosphoribosylamino)methylideneamino] imidazole-4-carboxamide isomerase.